The sequence spans 302 residues: Quinolinate synthase (302 aa).

Positions 25 and 42 each coordinate iminosuccinate. C87 contributes to the [4Fe-4S] cluster binding site. Iminosuccinate contacts are provided by residues 113–115 (YVN) and S130. C172 serves as a coordination point for [4Fe-4S] cluster. Iminosuccinate contacts are provided by residues 198–200 (HPE) and T215. C260 contributes to the [4Fe-4S] cluster binding site.

This sequence belongs to the quinolinate synthase family. Type 2 subfamily. It depends on [4Fe-4S] cluster as a cofactor.

The protein resides in the cytoplasm. The enzyme catalyses iminosuccinate + dihydroxyacetone phosphate = quinolinate + phosphate + 2 H2O + H(+). It participates in cofactor biosynthesis; NAD(+) biosynthesis; quinolinate from iminoaspartate: step 1/1. Its function is as follows. Catalyzes the condensation of iminoaspartate with dihydroxyacetone phosphate to form quinolinate. The polypeptide is Quinolinate synthase (Methanoregula boonei (strain DSM 21154 / JCM 14090 / 6A8)).